Reading from the N-terminus, the 73-residue chain is Cell division protein ZapB (73 aa).

The stretch at 3-66 (LELLSQLETK…SWSDKVNGLV (64 aa)) forms a coiled coil.

This sequence belongs to the ZapB family. Homodimer. The ends of the coiled-coil dimer bind to each other, forming polymers. Interacts with FtsZ.

Its subcellular location is the cytoplasm. Its function is as follows. Non-essential, abundant cell division factor that is required for proper Z-ring formation. It is recruited early to the divisome by direct interaction with FtsZ, stimulating Z-ring assembly and thereby promoting cell division earlier in the cell cycle. Its recruitment to the Z-ring requires functional FtsA or ZipA. The chain is Cell division protein ZapB from Shewanella frigidimarina (strain NCIMB 400).